The chain runs to 400 residues: NADPH dehydrogenase 1 (400 aa).

Residues Thr38 and Gln115 each contribute to the FMN site. Residues His192 and Asn195 each coordinate substrate. The Proton donor role is filled by Tyr197. Residues Arg244 and Arg349 each coordinate FMN. Tyr376 is a binding site for substrate.

As to quaternary structure, homodimer or heterodimer. It depends on FMN as a cofactor.

The enzyme catalyses A + NADPH + H(+) = AH2 + NADP(+). Functionally, flavin-dependent enoate reductase that catalyzes the chemo- and stereoslective hydrogenation of electron-poor alkenes. The enzyme is reduced by NADPH, and oxygen, quinones, and alpha,beta-unsaturated aldehydes and ketones can act as electron acceptors to complete catalytic turnover. The physiological oxidant remains elusive. The polypeptide is NADPH dehydrogenase 1 (Saccharomyces pastorianus (Lager yeast)).